Consider the following 119-residue polypeptide: Large ribosomal subunit protein uL18 (119 aa).

Belongs to the universal ribosomal protein uL18 family. In terms of assembly, part of the 50S ribosomal subunit; part of the 5S rRNA/L5/L18/L25 subcomplex. Contacts the 5S and 23S rRNAs.

Its function is as follows. This is one of the proteins that bind and probably mediate the attachment of the 5S RNA into the large ribosomal subunit, where it forms part of the central protuberance. This chain is Large ribosomal subunit protein uL18, found in Borrelia hermsii (strain HS1 / DAH).